Consider the following 462-residue polypeptide: Envelope glycoprotein C (462 aa).

An N-terminal signal peptide occupies residues 1–23 (MAPRGSGRLEAVVFAVMVLFCSG). Topologically, residues 24 to 433 (TSTATTAAAP…NMPLRQGRPM (410 aa)) are virion surface. Low complexity predominate over residues 29 to 38 (TAAAPASSPG). The segment at 29 to 57 (TAAAPASSPGIQTSSPAPGTGSTRLPGTR) is disordered. Polar residues predominate over residues 39–57 (IQTSSPAPGTGSTRLPGTR). N-linked (GlcNAc...) asparagine; by host glycans are attached at residues Asn66, Asn94, Asn136, Asn173, Asn249, and Asn417. Residues 434 to 454 (LICLAVVMGLFVLGSFLAVVI) form a helical membrane-spanning segment. Residues 455-462 (SACLWGSG) are Cytoplasmic-facing.

This sequence belongs to the herpesviridae glycoprotein C family.

Its subcellular location is the virion membrane. The sequence is that of Envelope glycoprotein C (gC) from Psittacid herpesvirus 1 (isolate Amazon parrot/-/97-0001/1997) (PsHV-1).